Consider the following 227-residue polypeptide: ATP synthase F(0) complex subunit a (227 aa).

6 consecutive transmembrane segments (helical) span residues 13 to 33 (YLLGIPLILVAMLLPWLLFPA), 69 to 89 (WALLFASLMVFLITINLLGLL), 98 to 118 (QLSLNMGFAVPLWLATVIIGM), 132 to 152 (EGTPIPLIPALIIIETISLFI), 179 to 199 (VFVLLPMMPAVAILTASVLFL), and 202 to 222 (LLEVAVAMIQAYVFILLLSLY).

It belongs to the ATPase A chain family. As to quaternary structure, component of the ATP synthase complex composed at least of ATP5F1A/subunit alpha, ATP5F1B/subunit beta, ATP5MC1/subunit c (homooctomer), MT-ATP6/subunit a, MT-ATP8/subunit 8, ATP5ME/subunit e, ATP5MF/subunit f, ATP5MG/subunit g, ATP5MK/subunit k, ATP5MJ/subunit j, ATP5F1C/subunit gamma, ATP5F1D/subunit delta, ATP5F1E/subunit epsilon, ATP5PF/subunit F6, ATP5PB/subunit b, ATP5PD/subunit d, ATP5PO/subunit OSCP. ATP synthase complex consists of a soluble F(1) head domain (subunits alpha(3) and beta(3)) - the catalytic core - and a membrane F(0) domain - the membrane proton channel (subunits c, a, 8, e, f, g, k and j). These two domains are linked by a central stalk (subunits gamma, delta, and epsilon) rotating inside the F1 region and a stationary peripheral stalk (subunits F6, b, d, and OSCP). Interacts with DNAJC30; interaction is direct.

The protein localises to the mitochondrion inner membrane. It carries out the reaction H(+)(in) = H(+)(out). Functionally, subunit a, of the mitochondrial membrane ATP synthase complex (F(1)F(0) ATP synthase or Complex V) that produces ATP from ADP in the presence of a proton gradient across the membrane which is generated by electron transport complexes of the respiratory chain. ATP synthase complex consist of a soluble F(1) head domain - the catalytic core - and a membrane F(1) domain - the membrane proton channel. These two domains are linked by a central stalk rotating inside the F(1) region and a stationary peripheral stalk. During catalysis, ATP synthesis in the catalytic domain of F(1) is coupled via a rotary mechanism of the central stalk subunits to proton translocation. With the subunit c (ATP5MC1), forms the proton-conducting channel in the F(0) domain, that contains two crucial half-channels (inlet and outlet) that facilitate proton movement from the mitochondrial intermembrane space (IMS) into the matrix. Protons are taken up via the inlet half-channel and released through the outlet half-channel, following a Grotthuss mechanism. This Danio rerio (Zebrafish) protein is ATP synthase F(0) complex subunit a.